The chain runs to 319 residues: Ribose-phosphate pyrophosphokinase (319 aa).

ATP is bound by residues 41-43 (NGE) and 100-101 (RQ). Residues His134 and Asp175 each coordinate Mg(2+). Residue Lys198 is part of the active site. Residues Arg200, Asp224, and 228 to 232 (DTAGS) contribute to the D-ribose 5-phosphate site.

The protein belongs to the ribose-phosphate pyrophosphokinase family. Class I subfamily. Homohexamer. Mg(2+) is required as a cofactor.

It is found in the cytoplasm. The catalysed reaction is D-ribose 5-phosphate + ATP = 5-phospho-alpha-D-ribose 1-diphosphate + AMP + H(+). Its pathway is metabolic intermediate biosynthesis; 5-phospho-alpha-D-ribose 1-diphosphate biosynthesis; 5-phospho-alpha-D-ribose 1-diphosphate from D-ribose 5-phosphate (route I): step 1/1. In terms of biological role, involved in the biosynthesis of the central metabolite phospho-alpha-D-ribosyl-1-pyrophosphate (PRPP) via the transfer of pyrophosphoryl group from ATP to 1-hydroxyl of ribose-5-phosphate (Rib-5-P). The chain is Ribose-phosphate pyrophosphokinase from Clostridium acetobutylicum (strain ATCC 824 / DSM 792 / JCM 1419 / IAM 19013 / LMG 5710 / NBRC 13948 / NRRL B-527 / VKM B-1787 / 2291 / W).